A 63-amino-acid polypeptide reads, in one-letter code: uncharacterized protein (63 aa).

The protein localises to the mitochondrion. This is an uncharacterized protein from Marchantia polymorpha (Common liverwort).